A 518-amino-acid polypeptide reads, in one-letter code: MEGRGFSGLYRNSSEELFLKTVMESPIGMPVPSMEMLGFKNVSQGFRADSEELFKRWLTNGEGYNSSSIGFSSRLSKRISTELVNGSNQLQVGVASDGRNNDKPFIQNNLLANDVSGDFNFPIRDPVDRELQPSNLFLAKAWFLSDQRMTRSRSSELRRRYSEMQNGLATQGIESICMDPQHGAEATKQEVANFNGYNYLSMCELPSQKGSFMSPSNSCSSNFNTPQFGDMDKVSSCVSMLKGTLQRRRLSSQLEKEAAEDDLNGIFYPQEPLFQTGFDQGQENWSNQTPVNVQVDSIGEVKDHGVLQTLEGSTNPVVDGFANQINQIYVGTASGEPSQSESSNAAPVISSGLDTCEGPINSNQTLCESSWKQVGVSKSSENTQNRVKGFREQIMDNLKDDKKRKSLERYGSITSAVSDDKGDTTKKRRVERSRKMAEAKERNSTPSVPSDMQAVLKRCENLEKEVRSLKLNLSFMNRKDSEQTKQIEDLQKQNEELADEKERLLEEIERILSETEKM.

The tract at residues 401–451 (DKKRKSLERYGSITSAVSDDKGDTTKKRRVERSRKMAEAKERNSTPSVPSD) is disordered. 2 consecutive short sequence motifs (nuclear localization signal) follow at residues 402–405 (KKRK) and 426–429 (KKRR). Over residues 433–443 (SRKMAEAKERN) the composition is skewed to basic and acidic residues. Positions 452–518 (MQAVLKRCEN…ERILSETEKM (67 aa)) form a coiled coil.

Belongs to the CYCLOPS family. As to quaternary structure, forms homodimers. Interacts with CCAMK. Post-translationally, phosphorylated at the N-terminus by CCAMK. In terms of tissue distribution, expressed in roots.

It localises to the nucleus. In terms of biological role, involved in symbiotic signaling. Required for root infection by symbiotic rhizobia, infection thread (IT) formation, and nodule development. Probably not involved in nodule organogenesis. Involved in arbuscular mycorrhizal (AM) symbiosis. Required for fungal infection of the outer cortical cell layers, and for arbuscule development during the AM symbiosis, by binding, as a complex comprising CCaMK, CYCLOPS, and DELLA, to RAM1 promoter cis element thus promoting its expression. Acts downstream of CCAMK. Binds to the promoter of ERN1 and strongly transactivates ERN1, a transcriptional regulator required for nodulation. The polypeptide is Protein CYCLOPS (Lotus japonicus (Lotus corniculatus var. japonicus)).